Consider the following 298-residue polypeptide: Heme A synthase (298 aa).

Topologically, residues 1–6 (MHRSLK) are cytoplasmic. The chain crosses the membrane as a helical span at residues 7–27 (IFGTLTSIGMVIVLMQGALVT). Over 28 to 62 (KTESGEGCGATWPLCFGEVIPTNPAIETIIEYSHR) the chain is Extracellular. A disulfide bridge connects residues C35 and C42. Residue E58 is part of the active site. H61 serves as a coordination point for heme o. The helical transmembrane segment at 63-83 (IVSGLLGAMVIILAIWAWRKL) threads the bilayer. Residues 84–92 (SHIRETKVM) lie on the Cytoplasmic side of the membrane. Residues 93–113 (AILAVLFIIFQGLLGAGAVVF) traverse the membrane as a helical segment. Residues 114-117 (GQSH) are Extracellular-facing. A helical membrane pass occupies residues 118-138 (AILALHFGISAISLATVVLLT). H123 is a binding site for heme o. Residues 139 to 158 (TLAFEDGKPNPPALIVKKGY) are Cytoplasmic-facing. Residues 159 to 179 (KGYILAVFAYCYAVIYTGAYV) traverse the membrane as a helical segment. The Extracellular portion of the chain corresponds to 180-209 (KHTQATLACGDFPLCNGQWIPMLSGPVGAH). C188 and C194 are joined by a disulfide. Residues 210-230 (FFHRVAGTLLLILLVVALIWT) traverse the membrane as a helical segment. A heme b-binding site is contributed by H212. Topologically, residues 231-244 (LRKYSHYRSLVWTH) are cytoplasmic. A helical membrane pass occupies residues 245 to 265 (ILCVILVLTQYATGISIVLTG). Topologically, residues 266–271 (NELFVA) are extracellular. Residues 272-292 (MMHALIVSILFTTLCYIVMIL) form a helical membrane-spanning segment. A heme b-binding site is contributed by H274. Residues 293 to 298 (SRNKAV) are Cytoplasmic-facing.

It belongs to the COX15/CtaA family. Type 1 subfamily. In terms of assembly, interacts with CtaB. It depends on heme b as a cofactor.

Its subcellular location is the cell membrane. The catalysed reaction is Fe(II)-heme o + 2 A + H2O = Fe(II)-heme a + 2 AH2. It participates in porphyrin-containing compound metabolism; heme A biosynthesis; heme A from heme O: step 1/1. Its function is as follows. Catalyzes the conversion of heme O to heme A by two successive hydroxylations of the methyl group at C8. The first hydroxylation forms heme I, the second hydroxylation results in an unstable dihydroxymethyl group, which spontaneously dehydrates, resulting in the formyl group of heme A. This Halalkalibacterium halodurans (strain ATCC BAA-125 / DSM 18197 / FERM 7344 / JCM 9153 / C-125) (Bacillus halodurans) protein is Heme A synthase.